Reading from the N-terminus, the 248-residue chain is uncharacterized protein (248 aa).

S141 is a substrate binding site. Y154 (proton acceptor) is an active-site residue.

Belongs to the short-chain dehydrogenases/reductases (SDR) family.

This is an uncharacterized protein from Methylorubrum extorquens (strain ATCC 14718 / DSM 1338 / JCM 2805 / NCIMB 9133 / AM1) (Methylobacterium extorquens).